A 389-amino-acid chain; its full sequence is Succinate--CoA ligase [ADP-forming] subunit beta (389 aa).

In terms of domain architecture, ATP-grasp spans 9 to 236; the sequence is KELFASHGVP…KDAEDPLEAK (228 aa). Residues Lys-45, 52-54, Ser-94, and Glu-99 each bind ATP; that span reads GRG. Mg(2+) is bound by residues Asn-191 and Asp-205. Residues Asn-256 and 318–320 each bind substrate; that span reads GIT.

This sequence belongs to the succinate/malate CoA ligase beta subunit family. In terms of assembly, heterotetramer of two alpha and two beta subunits. It depends on Mg(2+) as a cofactor.

It carries out the reaction succinate + ATP + CoA = succinyl-CoA + ADP + phosphate. The enzyme catalyses GTP + succinate + CoA = succinyl-CoA + GDP + phosphate. The protein operates within carbohydrate metabolism; tricarboxylic acid cycle; succinate from succinyl-CoA (ligase route): step 1/1. Functionally, succinyl-CoA synthetase functions in the citric acid cycle (TCA), coupling the hydrolysis of succinyl-CoA to the synthesis of either ATP or GTP and thus represents the only step of substrate-level phosphorylation in the TCA. The beta subunit provides nucleotide specificity of the enzyme and binds the substrate succinate, while the binding sites for coenzyme A and phosphate are found in the alpha subunit. This is Succinate--CoA ligase [ADP-forming] subunit beta from Saccharopolyspora erythraea (strain ATCC 11635 / DSM 40517 / JCM 4748 / NBRC 13426 / NCIMB 8594 / NRRL 2338).